The following is a 146-amino-acid chain: D-aminoacyl-tRNA deacylase (146 aa).

The Gly-cisPro motif, important for rejection of L-amino acids motif lies at Gly-138–Pro-139.

It belongs to the DTD family. In terms of assembly, homodimer.

The protein resides in the cytoplasm. The catalysed reaction is glycyl-tRNA(Ala) + H2O = tRNA(Ala) + glycine + H(+). It carries out the reaction a D-aminoacyl-tRNA + H2O = a tRNA + a D-alpha-amino acid + H(+). In terms of biological role, an aminoacyl-tRNA editing enzyme that deacylates mischarged D-aminoacyl-tRNAs. Also deacylates mischarged glycyl-tRNA(Ala), protecting cells against glycine mischarging by AlaRS. Acts via tRNA-based rather than protein-based catalysis; rejects L-amino acids rather than detecting D-amino acids in the active site. By recycling D-aminoacyl-tRNA to D-amino acids and free tRNA molecules, this enzyme counteracts the toxicity associated with the formation of D-aminoacyl-tRNA entities in vivo and helps enforce protein L-homochirality. This chain is D-aminoacyl-tRNA deacylase, found in Xanthomonas euvesicatoria pv. vesicatoria (strain 85-10) (Xanthomonas campestris pv. vesicatoria).